The chain runs to 953 residues: Isoleucine--tRNA ligase (953 aa).

A 'HIGH' region motif is present at residues 58–68 (PYANGSIHIGH). Position 577 (glutamate 577) interacts with L-isoleucyl-5'-AMP. Residues 618–622 (KMSKS) carry the 'KMSKS' region motif. Lysine 621 contributes to the ATP binding site. Residues cysteine 916, cysteine 919, cysteine 936, and cysteine 939 each contribute to the Zn(2+) site.

This sequence belongs to the class-I aminoacyl-tRNA synthetase family. IleS type 1 subfamily. Monomer. It depends on Zn(2+) as a cofactor.

It is found in the cytoplasm. The catalysed reaction is tRNA(Ile) + L-isoleucine + ATP = L-isoleucyl-tRNA(Ile) + AMP + diphosphate. Catalyzes the attachment of isoleucine to tRNA(Ile). As IleRS can inadvertently accommodate and process structurally similar amino acids such as valine, to avoid such errors it has two additional distinct tRNA(Ile)-dependent editing activities. One activity is designated as 'pretransfer' editing and involves the hydrolysis of activated Val-AMP. The other activity is designated 'posttransfer' editing and involves deacylation of mischarged Val-tRNA(Ile). The protein is Isoleucine--tRNA ligase of Aeromonas hydrophila subsp. hydrophila (strain ATCC 7966 / DSM 30187 / BCRC 13018 / CCUG 14551 / JCM 1027 / KCTC 2358 / NCIMB 9240 / NCTC 8049).